A 374-amino-acid polypeptide reads, in one-letter code: MNTRAKAPEETTVVVGMSGGVDSSVTAYLLKQQGYNVIGIFMKNWDDTDENGFCTATEDYEDVIAVANQIGIPYYAVNFEKEYWDKVFTYFLDEYKLGRTPNPDVMCNKEIKFKAFLDHAMRLGADFVATGHYARAVYEDGEHKLLRGVDTNKDQTYFLNQLSQDQIAKAMFPIGHMEKSEVRKIAEEANLATAKKKDSTGICFIGERNFKQFLSQYLPAQPGEMRTLDGKTMGRHDGLMYYTMGQRHGLGIGGDGEPWFVVGKNLQDNILFVEQGFHNELLYSEGLYASDISWTATMPAGTEFRCTAKFRYRQTDTPVTVRVLDGGRLDVAFDERQRAITPGQAVVFYDGDVCLGGATIDDAYKAGQALTYLA.

Residues Gly16–Ser23 and Met42 each bind ATP. An interaction with target base in tRNA region spans residues Asn102–Asp104. The Nucleophile role is filled by Cys107. Cys107 and Cys203 form a disulfide bridge. Gly131 is a binding site for ATP. The interval Lys153–Gln155 is interaction with tRNA. The active-site Cysteine persulfide intermediate is Cys203. The interaction with tRNA stretch occupies residues Arg311–Tyr312.

This sequence belongs to the MnmA/TRMU family.

It localises to the cytoplasm. It catalyses the reaction S-sulfanyl-L-cysteinyl-[protein] + uridine(34) in tRNA + AH2 + ATP = 2-thiouridine(34) in tRNA + L-cysteinyl-[protein] + A + AMP + diphosphate + H(+). Its function is as follows. Catalyzes the 2-thiolation of uridine at the wobble position (U34) of tRNA, leading to the formation of s(2)U34. This is tRNA-specific 2-thiouridylase MnmA from Exiguobacterium sibiricum (strain DSM 17290 / CCUG 55495 / CIP 109462 / JCM 13490 / 255-15).